A 71-amino-acid chain; its full sequence is Omega-conotoxin-like CnVIIE (71 aa).

A signal peptide spans 1–22 (MKLTCVVIVAVLLLTACQLITA). Positions 23–45 (DDSRGTQKHRALRSDTKLSMSTR) are excised as a propeptide. Cystine bridges form between cysteine 46/cysteine 61, cysteine 53/cysteine 65, and cysteine 60/cysteine 70. 4-hydroxyproline; partial is present on proline 52. A Cysteine amide modification is found at cysteine 70.

This sequence belongs to the conotoxin M superfamily. In terms of tissue distribution, expressed by the venom duct.

It localises to the secreted. Its function is as follows. Omega-conotoxins act at presynaptic membranes, they bind and block voltage-gated calcium channels (Cav). This is Omega-conotoxin-like CnVIIE from Conus consors (Singed cone).